The primary structure comprises 553 residues: Methyl-coenzyme M reductase I subunit alpha (553 aa).

Q150 is a coenzyme F430 binding site. Coenzyme B-binding positions include R228, 259–260 (KH), and R273. At R274 the chain carries 5-methylarginine. Residues Y335 and Y447 each contribute to the coenzyme M site.

Belongs to the methyl-coenzyme M reductase alpha subunit family. MCR is a hexamer of two alpha, two beta, and two gamma chains, forming a dimer of heterotrimers. It depends on coenzyme F430 as a cofactor. In terms of processing, is methylated on C5 of Arg-274 by the methyltransferase MJ0841. This post-translational methylation, despite being not essential in vivo, plays a role for the stability and structural integrity of MCR.

Its subcellular location is the cytoplasm. The enzyme catalyses coenzyme B + methyl-coenzyme M = methane + coenzyme M-coenzyme B heterodisulfide. The protein operates within one-carbon metabolism; methyl-coenzyme M reduction; methane from methyl-coenzyme M: step 1/1. Component of the methyl-coenzyme M reductase (MCR) I that catalyzes the reductive cleavage of methyl-coenzyme M (CoM-S-CH3 or 2-(methylthio)ethanesulfonate) using coenzyme B (CoB or 7-mercaptoheptanoylthreonine phosphate) as reductant which results in the production of methane and the mixed heterodisulfide of CoB and CoM (CoM-S-S-CoB). This is the final step in methanogenesis. The polypeptide is Methyl-coenzyme M reductase I subunit alpha (mcrA) (Methanocaldococcus jannaschii (strain ATCC 43067 / DSM 2661 / JAL-1 / JCM 10045 / NBRC 100440) (Methanococcus jannaschii)).